A 249-amino-acid chain; its full sequence is Triosephosphate isomerase (249 aa).

9–11 is a binding site for substrate; sequence NWK. The Electrophile role is filled by histidine 94. The active-site Proton acceptor is the glutamate 166. Substrate is bound by residues glycine 172 and 232 to 233; that span reads GG.

The protein belongs to the triosephosphate isomerase family. As to quaternary structure, homodimer.

The protein resides in the cytoplasm. It catalyses the reaction D-glyceraldehyde 3-phosphate = dihydroxyacetone phosphate. Its pathway is carbohydrate biosynthesis; gluconeogenesis. It functions in the pathway carbohydrate degradation; glycolysis; D-glyceraldehyde 3-phosphate from glycerone phosphate: step 1/1. In terms of biological role, involved in the gluconeogenesis. Catalyzes stereospecifically the conversion of dihydroxyacetone phosphate (DHAP) to D-glyceraldehyde-3-phosphate (G3P). The protein is Triosephosphate isomerase of Xylella fastidiosa (strain M12).